The sequence spans 171 residues: uncharacterized protein (171 aa).

Positions 1-20 (MRRVLFSCFCGLLWSSSGWA) are cleaved as a signal peptide. Cys-40 and Cys-80 are disulfide-bonded.

It belongs to the fimbrial protein family.

It localises to the fimbrium. Part of the sfmACDHF fimbrial operon. Could contribute to adhesion to various surfaces in specific environmental niches. Increases adhesion to eukaryotic T24 bladder epithelial cells in the absence of fim genes. This is an uncharacterized protein from Escherichia coli (strain K12).